Consider the following 365-residue polypeptide: Aminomethyltransferase (365 aa).

Belongs to the GcvT family. In terms of assembly, the glycine cleavage system is composed of four proteins: P, T, L and H.

The enzyme catalyses N(6)-[(R)-S(8)-aminomethyldihydrolipoyl]-L-lysyl-[protein] + (6S)-5,6,7,8-tetrahydrofolate = N(6)-[(R)-dihydrolipoyl]-L-lysyl-[protein] + (6R)-5,10-methylene-5,6,7,8-tetrahydrofolate + NH4(+). Its function is as follows. The glycine cleavage system catalyzes the degradation of glycine. The polypeptide is Aminomethyltransferase (Frankia alni (strain DSM 45986 / CECT 9034 / ACN14a)).